We begin with the raw amino-acid sequence, 486 residues long: Glutamyl-tRNA(Gln) amidotransferase subunit A (486 aa).

Active-site charge relay system residues include Lys-79 and Ser-154. Ser-178 (acyl-ester intermediate) is an active-site residue.

It belongs to the amidase family. GatA subfamily. Heterotrimer of A, B and C subunits.

It catalyses the reaction L-glutamyl-tRNA(Gln) + L-glutamine + ATP + H2O = L-glutaminyl-tRNA(Gln) + L-glutamate + ADP + phosphate + H(+). Functionally, allows the formation of correctly charged Gln-tRNA(Gln) through the transamidation of misacylated Glu-tRNA(Gln) in organisms which lack glutaminyl-tRNA synthetase. The reaction takes place in the presence of glutamine and ATP through an activated gamma-phospho-Glu-tRNA(Gln). The chain is Glutamyl-tRNA(Gln) amidotransferase subunit A from Dehalococcoides mccartyi (strain CBDB1).